Consider the following 517-residue polypeptide: Acyltransferase AFT15-1 (517 aa).

Residue histidine 180 is the Proton acceptor of the active site.

This sequence belongs to the plant acyltransferase family.

The protein operates within mycotoxin biosynthesis. Its function is as follows. Acyltransferase; part of the gene clusters that mediate the biosynthesis of the host-selective toxins (HSTs) AF-toxins responsible for Alternaria black spot of strawberry disease by the strawberry pathotype. AF-toxin I and III are valine derivatives of 2,3-dyhydroxy-isovaleric acid and 2-hydroxy-isovaleric acid respectively, while AF II is an isoleucine derivative of 2-hydroxy-valeric acid. These derivatives are bound to a 9,10-epoxy-8-hydroxy-9-methyl-decatrienoic acid (EDA) moiety. On cellular level, AF-toxins affect plasma membrane of susceptible cells and cause a sudden increase in loss of K(+) after a few minutes of toxin treatment. The aldo-keto reductase AFTS1 catalyzes the conversion of 2-keto-isovaleric acid (2-KIV) to 2-hydroxy-isovaleric acid (2-HIV) by reduction of its ketone to an alcohol. The acyl-CoA ligase AFT1, the hydrolase AFT2 and the enoyl-CoA hydratases AFT3 and AFT6, but also the polyketide synthase AFT9, the acyl-CoA dehydrogenase AFT10, the cytochrome P450 monooxygenase AFT11 and the oxidoreductase AFT12 are all involved in the biosynthesis of the AK-, AF- and ACT-toxin common EDA structural moiety. The exact function of each enzyme, and of additional enzymes identified within the AF-toxin clusters have still to be determined. In Alternaria alternata (Alternaria rot fungus), this protein is Acyltransferase AFT15-1 (AFT15-1).